The chain runs to 2273 residues: Acetyl-CoA carboxylase, mitochondrial (2273 aa).

The N-terminal 104 residues, 1-104, are a transit peptide targeting the mitochondrion; that stretch reads KGKTITHGQS…RGNIHKHTRL (104 aa). Residues 134–635 form the Biotin carboxylation domain; it reads VISKILIANN…STGWLDDLIL (502 aa). The ATP-grasp domain maps to 292–484; sequence KTNFVSVPDD…LPATQLQIAM (193 aa). Position 332–337 (332–337) interacts with ATP; the sequence is GGGGKG. R459 is an active-site residue. A Biotinyl-binding domain is found at 763–837; that stretch reads LEAELNPTQV…EAGDVIAKLT (75 aa). K804 is modified (N6-biotinyllysine). Positions 1532 to 1867 constitute a CoA carboxyltransferase N-terminal domain; sequence PYSVKDWLQP…KRDMSPPLLE (336 aa). A carboxyltransferase region spans residues 1532-2187; that stretch reads PYSVKDWLQP…EGQVIKRLQK (656 aa). 3 residues coordinate CoA: R1776, K2080, and R2082. The CoA carboxyltransferase C-terminal domain maps to 1871–2187; the sequence is RWDRDVDFKP…EGQVIKRLQK (317 aa).

Biotin serves as cofactor.

It is found in the mitochondrion. The enzyme catalyses hydrogencarbonate + acetyl-CoA + ATP = malonyl-CoA + ADP + phosphate + H(+). It catalyses the reaction N(6)-biotinyl-L-lysyl-[protein] + hydrogencarbonate + ATP = N(6)-carboxybiotinyl-L-lysyl-[protein] + ADP + phosphate + H(+). The protein operates within lipid metabolism; malonyl-CoA biosynthesis; malonyl-CoA from acetyl-CoA: step 1/1. Catalyzes the rate-limiting reaction in the mitochondrial fatty acid synthesis (FAS) type II pathway. Responsible for the production of the mitochondrial malonyl-CoA, used for the biosynthesis of the cofactor lipoic acid. This protein carries three functions: biotin carboxyl carrier protein, biotin carboxylase, and carboxyltransferase. The chain is Acetyl-CoA carboxylase, mitochondrial (HFA1) from Saccharomyces cerevisiae (strain JAY291) (Baker's yeast).